The primary structure comprises 553 residues: Probable inactive serine/threonine-protein kinase samkD (553 aa).

An SAM domain is found at 24 to 90 (WDNETVCKWL…FEYQILKNCY (67 aa)). A Protein kinase domain is found at 134 to 393 (YQYIETISKN…SKELLKSFWF (260 aa)). ATP is bound by residues 140–148 (ISKNKFCEI) and Lys165.

This sequence belongs to the protein kinase superfamily. Ser/Thr protein kinase family.

The sequence is that of Probable inactive serine/threonine-protein kinase samkD (samkD) from Dictyostelium discoideum (Social amoeba).